Consider the following 176-residue polypeptide: PKHD-type hydroxylase Mfla_0096 (176 aa).

Residues 78 to 147 (KVFPPLFNRY…NQIARGTYGA (70 aa)) enclose the Fe2OG dioxygenase domain.

Fe(2+) serves as cofactor. It depends on L-ascorbate as a cofactor.

The polypeptide is PKHD-type hydroxylase Mfla_0096 (Methylobacillus flagellatus (strain ATCC 51484 / DSM 6875 / VKM B-1610 / KT)).